Here is a 422-residue protein sequence, read N- to C-terminus: Acetyl-CoA acetyltransferase, mitochondrial (422 aa).

The N-terminal 28 residues, 1–28 (MPVLAALLRRGPLLQRRVQEIRYAERSY), are a transit peptide targeting the mitochondrion. Residue lysine 61 is modified to N6-acetyllysine; alternate. At lysine 61 the chain carries N6-succinyllysine; alternate. The residue at position 73 (lysine 73) is an N6-succinyllysine. The active-site Acyl-thioester intermediate is cysteine 121. Lysine 169, lysine 176, lysine 185, and lysine 197 each carry N6-acetyllysine; alternate. An N6-succinyllysine; alternate mark is found at lysine 169, lysine 176, lysine 185, and lysine 197. Tyrosine 214 provides a ligand contact to CoA. Tyrosine 214 contacts K(+). Position 218 is an N6-acetyllysine; alternate (lysine 218). N6-succinyllysine; alternate is present on lysine 218. Lysine 238 is modified (N6-succinyllysine). Lysine 240 is subject to N6-acetyllysine; alternate. N6-succinyllysine; alternate is present on lysine 240. N6-acetyllysine occurs at positions 246 and 252. Residues 253 to 255 (RVD) and lysine 258 contribute to the CoA site. Position 258 is an N6-acetyllysine; alternate (lysine 258). An N6-succinyllysine; alternate modification is found at lysine 258. Residues lysine 261 and lysine 263 each carry the N6-succinyllysine modification. 3 residues coordinate K(+): alanine 275, alanine 276, and alanine 278. Serine 279 contributes to the CoA binding site. An N6-acetyllysine modification is found at lysine 333. Residue valine 376 participates in K(+) binding. The active-site Proton donor/acceptor is cysteine 408.

It belongs to the thiolase-like superfamily. Thiolase family. Homotetramer. Post-translationally, succinylation at Lys-263, adjacent to a coenzyme A binding site. Desuccinylated by SIRT5.

Its subcellular location is the mitochondrion. The catalysed reaction is 2 acetyl-CoA = acetoacetyl-CoA + CoA. It carries out the reaction propanoyl-CoA + acetyl-CoA = 2-methyl-3-oxobutanoyl-CoA + CoA. It participates in lipid metabolism; fatty acid beta-oxidation. Activated by potassium ions, but not sodium ions. This is one of the enzymes that catalyzes the last step of the mitochondrial beta-oxidation pathway, an aerobic process breaking down fatty acids into acetyl-CoA. Using free coenzyme A/CoA, catalyzes the thiolytic cleavage of medium- to long-chain 3-oxoacyl-CoAs into acetyl-CoA and a fatty acyl-CoA shortened by two carbon atoms. The activity of the enzyme is reversible and it can also catalyze the condensation of two acetyl-CoA molecules into acetoacetyl-CoA. Thereby, it plays a major role in ketone body metabolism. The protein is Acetyl-CoA acetyltransferase, mitochondrial (ACAT1) of Bos taurus (Bovine).